We begin with the raw amino-acid sequence, 399 residues long: CCA-adding enzyme (399 aa).

ATP is bound by residues Gly28 and Arg31. CTP-binding residues include Gly28 and Arg31. Asp41 and Asp43 together coordinate Mg(2+). ATP is bound by residues Arg112, Asp155, Arg158, Arg161, and Arg164. CTP contacts are provided by Arg112, Asp155, Arg158, Arg161, and Arg164.

Belongs to the tRNA nucleotidyltransferase/poly(A) polymerase family. Bacterial CCA-adding enzyme type 3 subfamily. As to quaternary structure, homodimer. It depends on Mg(2+) as a cofactor.

It carries out the reaction a tRNA precursor + 2 CTP + ATP = a tRNA with a 3' CCA end + 3 diphosphate. It catalyses the reaction a tRNA with a 3' CCA end + 2 CTP + ATP = a tRNA with a 3' CCACCA end + 3 diphosphate. Functionally, catalyzes the addition and repair of the essential 3'-terminal CCA sequence in tRNAs without using a nucleic acid template. Adds these three nucleotides in the order of C, C, and A to the tRNA nucleotide-73, using CTP and ATP as substrates and producing inorganic pyrophosphate. tRNA 3'-terminal CCA addition is required both for tRNA processing and repair. Also involved in tRNA surveillance by mediating tandem CCA addition to generate a CCACCA at the 3' terminus of unstable tRNAs. While stable tRNAs receive only 3'-terminal CCA, unstable tRNAs are marked with CCACCA and rapidly degraded. The polypeptide is CCA-adding enzyme (Staphylococcus saprophyticus subsp. saprophyticus (strain ATCC 15305 / DSM 20229 / NCIMB 8711 / NCTC 7292 / S-41)).